We begin with the raw amino-acid sequence, 142 residues long: Small ribosomal subunit protein uS12 (142 aa).

It belongs to the universal ribosomal protein uS12 family. Part of the 30S ribosomal subunit.

With S4 and S5 plays an important role in translational accuracy. Located at the interface of the 30S and 50S subunits. This chain is Small ribosomal subunit protein uS12, found in Methanococcoides burtonii (strain DSM 6242 / NBRC 107633 / OCM 468 / ACE-M).